Reading from the N-terminus, the 1234-residue chain is DNA-directed RNA polymerase subunit beta (1234 aa).

It belongs to the RNA polymerase beta chain family. In terms of assembly, the RNAP catalytic core consists of 2 alpha, 1 beta, 1 beta' and 1 omega subunit. When a sigma factor is associated with the core the holoenzyme is formed, which can initiate transcription.

The enzyme catalyses RNA(n) + a ribonucleoside 5'-triphosphate = RNA(n+1) + diphosphate. Its function is as follows. DNA-dependent RNA polymerase catalyzes the transcription of DNA into RNA using the four ribonucleoside triphosphates as substrates. The sequence is that of DNA-directed RNA polymerase subunit beta from Clostridium perfringens (strain SM101 / Type A).